Consider the following 181-residue polypeptide: ATP-dependent protease subunit HslV (181 aa).

Thr9 is a catalytic residue. Residues Ala166, Cys169, and Thr172 each contribute to the Na(+) site.

Belongs to the peptidase T1B family. HslV subfamily. As to quaternary structure, a double ring-shaped homohexamer of HslV is capped on each side by a ring-shaped HslU homohexamer. The assembly of the HslU/HslV complex is dependent on binding of ATP.

The protein resides in the cytoplasm. The catalysed reaction is ATP-dependent cleavage of peptide bonds with broad specificity.. Allosterically activated by HslU binding. In terms of biological role, protease subunit of a proteasome-like degradation complex believed to be a general protein degrading machinery. The chain is ATP-dependent protease subunit HslV from Staphylococcus aureus (strain JH1).